The chain runs to 242 residues: Probable transcriptional regulatory protein XCC3027 (242 aa).

It belongs to the TACO1 family.

The protein resides in the cytoplasm. The sequence is that of Probable transcriptional regulatory protein XCC3027 from Xanthomonas campestris pv. campestris (strain ATCC 33913 / DSM 3586 / NCPPB 528 / LMG 568 / P 25).